Reading from the N-terminus, the 290-residue chain is Short chain dehydrogenase/reductase nsrO (290 aa).

Residues Ile-37 and Lys-149 each contribute to the NADP(+) site. Residues Ser-168 and Tyr-182 each act as proton donor in the active site. Positions 182, 186, and 221 each coordinate NADP(+). Lys-186 (lowers pKa of active site Tyr) is an active-site residue.

It belongs to the short-chain dehydrogenases/reductases (SDR) family.

The protein operates within secondary metabolite biosynthesis. In terms of biological role, short chain dehydrogenase/reductase; part of the gene cluster that mediates the biosynthesis of the tetrahydroxanthone dimer neosartorin, which exhibits antibacterial activity. The two different monomeric units appear to be synthesized by the same set of enzymes, among which the Baeyer-Villiger monooxygenase nsrF is the key enzyme for the divergence of the biosynthetic routes. The pathway begins with the synthesis of atrochrysone thioester by the polyketide synthase nsrB. The atrochrysone carboxyl ACP thioesterase nsrC then breaks the thioester bond and releases the atrochrysone carboxylic acid from AacuL. Atrochrysone carboxylic acid is decarboxylated by the decarboxylase nsrE, and oxidized by the anthrone oxygenase nsrD to yield emodin. Emodin is then reduced to emodin hydroquinone by the oxidoreductase nsrR. A-ring reduction by the short chain dehydrogenase nsrJ, dehydration by the scytalone dehydratase-like protein nsrI and probable spontaneous re-oxidation, results in overall deoxygenation to chrysophanol. The Baeyer-Villiger monooxygenase nsrF accepts chrysophanol as a substrate to insert one oxygen atom at two different positions to yield the precursors of both monomric units. NsrF is promiscuous/flexible in interacting with the 2 (non methylated and methylated) aromatic rings of chrysophanol, thus diverging the biosynthetic pathway at this point. After the hydrolysis of the lactones, methylesterification by the methyltransferase nsrG yields respectively moniliphenone and 2,2',6'-trihydroxy-4-methyl-6-methoxya-cyldiphenylmethanone. The next steps are the hydroxylation by the FAD-dependent monooxygenase nsrK, followed by isomerization by the monooxygenase nsrQ. The short chain dehydrogenase/reductase nsrO then catalyzes the C-5 ketoreduction to give the xanthone skeleton of blennolide C and 5-acetylblennolide A. The acetyltransferase nsrL has a strict substrate specificity and uses only blennolide A but not blennolide C to yield 5-acetylblennolide A as the single-acetylated product. In the final step of the biosynthesis, the heterodimerization of the 2 xanthones, blennolide C and 5-acetylblennolide A, is catalyzed by the cytochrome P450 monooxygenase nsrP. NsrP can utilize at least three different xanthones as its substrates to perform the dimerization reaction. In Aspergillus novofumigatus (strain IBT 16806), this protein is Short chain dehydrogenase/reductase nsrO.